The sequence spans 154 residues: MAANKERTFIAIKPDGVQRGLMGDIIKRFEQKGFRLVAMKFQQASQDLLRQHYIDLKDRPFYPGLVEYMSSGPVLAMVWEGLNVVKTGRVMLGETNPADSKPGTIRGDFCIQVGRNIIHGSDSVESANKEIALWFKDEELVENKSCAYEWVYEN.

ATP contacts are provided by lysine 13, phenylalanine 61, arginine 89, threonine 95, arginine 106, and asparagine 116. The Pros-phosphohistidine intermediate role is filled by histidine 119.

It belongs to the NDK family. It depends on Mg(2+) as a cofactor.

The protein localises to the cytoplasm. It catalyses the reaction a 2'-deoxyribonucleoside 5'-diphosphate + ATP = a 2'-deoxyribonucleoside 5'-triphosphate + ADP. The enzyme catalyses a ribonucleoside 5'-diphosphate + ATP = a ribonucleoside 5'-triphosphate + ADP. Major role in the synthesis of nucleoside triphosphates other than ATP. The ATP gamma phosphate is transferred to the NDP beta phosphate via a ping-pong mechanism, using a phosphorylated active-site intermediate. The chain is Nucleoside diphosphate kinase A1 from Xenopus laevis (African clawed frog).